We begin with the raw amino-acid sequence, 84 residues long: Large ribosomal subunit protein bL27 (84 aa).

A disordered region spans residues 1–22 (MAHKKAGGSTRNGRDSESKRLG).

It belongs to the bacterial ribosomal protein bL27 family.

In Shewanella frigidimarina (strain NCIMB 400), this protein is Large ribosomal subunit protein bL27.